A 430-amino-acid chain; its full sequence is Serine hydroxymethyltransferase (430 aa).

Position 120–122 (120–122 (GHI)) interacts with (6S)-5,6,7,8-tetrahydrofolate. The residue at position 226 (Lys-226) is an N6-(pyridoxal phosphate)lysine.

Belongs to the SHMT family. Homodimer. The cofactor is pyridoxal 5'-phosphate.

Its subcellular location is the cytoplasm. It participates in amino-acid biosynthesis; glycine biosynthesis; glycine from L-serine: step 1/1. Functionally, catalyzes the reversible interconversion of serine and glycine with a modified folate serving as the one-carbon carrier. Also exhibits a pteridine-independent aldolase activity toward beta-hydroxyamino acids, producing glycine and aldehydes, via a retro-aldol mechanism. This is Serine hydroxymethyltransferase from Pyrobaculum islandicum (strain DSM 4184 / JCM 9189 / GEO3).